Here is a 138-residue protein sequence, read N- to C-terminus: Basic phospholipase A2 beta-bungarotoxin A-AL3 chain (138 aa).

A signal peptide spans 1–10; that stretch reads LAVCVSLIGA. The propeptide occupies 11 to 18; it reads ANIPPQHL. 6 disulfide bridges follow: Cys-45–Cys-137, Cys-47–Cys-63, Cys-62–Cys-118, Cys-69–Cys-111, Cys-79–Cys-104, and Cys-97–Cys-109. Ca(2+) contacts are provided by Tyr-46, Gly-48, and Gly-50. His-66 is a catalytic residue. Asp-67 provides a ligand contact to Ca(2+). Asp-112 is an active-site residue.

The protein belongs to the phospholipase A2 family. Group I subfamily. D49 sub-subfamily. Heterodimer; disulfide-linked. The A chains have phospholipase A2 activity and the B chains show homology with the basic protease inhibitors. Requires Ca(2+) as cofactor. Expressed by the venom gland.

It localises to the secreted. The catalysed reaction is a 1,2-diacyl-sn-glycero-3-phosphocholine + H2O = a 1-acyl-sn-glycero-3-phosphocholine + a fatty acid + H(+). Functionally, snake venom phospholipase A2 (PLA2) that inhibits neuromuscular transmission by blocking acetylcholine release from the nerve termini. PLA2 catalyzes the calcium-dependent hydrolysis of the 2-acyl groups in 3-sn-phosphoglycerides. This is Basic phospholipase A2 beta-bungarotoxin A-AL3 chain from Bungarus multicinctus (Many-banded krait).